The following is a 355-amino-acid chain: Probable dual-specificity RNA methyltransferase RlmN (355 aa).

Glu107 acts as the Proton acceptor in catalysis. Positions Thr113 to Glu341 constitute a Radical SAM core domain. A disulfide bond links Cys120 and Cys346. Residues Cys127, Cys131, and Cys134 each coordinate [4Fe-4S] cluster. Residues Gly174–Glu175, Ser204, Ser227–His229, and Asn303 contribute to the S-adenosyl-L-methionine site. Cys346 serves as the catalytic S-methylcysteine intermediate.

This sequence belongs to the radical SAM superfamily. RlmN family. Requires [4Fe-4S] cluster as cofactor.

It localises to the cytoplasm. It carries out the reaction adenosine(2503) in 23S rRNA + 2 reduced [2Fe-2S]-[ferredoxin] + 2 S-adenosyl-L-methionine = 2-methyladenosine(2503) in 23S rRNA + 5'-deoxyadenosine + L-methionine + 2 oxidized [2Fe-2S]-[ferredoxin] + S-adenosyl-L-homocysteine. The catalysed reaction is adenosine(37) in tRNA + 2 reduced [2Fe-2S]-[ferredoxin] + 2 S-adenosyl-L-methionine = 2-methyladenosine(37) in tRNA + 5'-deoxyadenosine + L-methionine + 2 oxidized [2Fe-2S]-[ferredoxin] + S-adenosyl-L-homocysteine. Its function is as follows. Specifically methylates position 2 of adenine 2503 in 23S rRNA and position 2 of adenine 37 in tRNAs. This chain is Probable dual-specificity RNA methyltransferase RlmN, found in Trichormus variabilis (strain ATCC 29413 / PCC 7937) (Anabaena variabilis).